A 294-amino-acid polypeptide reads, in one-letter code: 4-hydroxy-tetrahydrodipicolinate synthase (294 aa).

Thr-47 contributes to the pyruvate binding site. Catalysis depends on Tyr-135, which acts as the Proton donor/acceptor. Lys-163 (schiff-base intermediate with substrate) is an active-site residue. Position 205 (Ile-205) interacts with pyruvate.

The protein belongs to the DapA family. As to quaternary structure, homotetramer; dimer of dimers.

The protein resides in the cytoplasm. It catalyses the reaction L-aspartate 4-semialdehyde + pyruvate = (2S,4S)-4-hydroxy-2,3,4,5-tetrahydrodipicolinate + H2O + H(+). The protein operates within amino-acid biosynthesis; L-lysine biosynthesis via DAP pathway; (S)-tetrahydrodipicolinate from L-aspartate: step 3/4. Functionally, catalyzes the condensation of (S)-aspartate-beta-semialdehyde [(S)-ASA] and pyruvate to 4-hydroxy-tetrahydrodipicolinate (HTPA). This Rickettsia typhi (strain ATCC VR-144 / Wilmington) protein is 4-hydroxy-tetrahydrodipicolinate synthase.